The following is a 93-amino-acid chain: Neurophysin 1 (93 aa).

Cystine bridges form between Cys10/Cys54, Cys13/Cys27, Cys21/Cys44, Cys28/Cys34, Cys61/Cys74, Cys68/Cys86, and Cys75/Cys80.

It belongs to the vasopressin/oxytocin family.

It is found in the secreted. Functionally, neurophysin 1 specifically binds oxytocin. This chain is Neurophysin 1, found in Anser anser anser (Western greylag goose).